The chain runs to 513 residues: Bifunctional purine biosynthesis protein PurH (513 aa).

Residues 1–144 enclose the MGS-like domain; it reads MKRALVSVSD…KNYRDVTIVV (144 aa).

Belongs to the PurH family.

The enzyme catalyses (6R)-10-formyltetrahydrofolate + 5-amino-1-(5-phospho-beta-D-ribosyl)imidazole-4-carboxamide = 5-formamido-1-(5-phospho-D-ribosyl)imidazole-4-carboxamide + (6S)-5,6,7,8-tetrahydrofolate. It carries out the reaction IMP + H2O = 5-formamido-1-(5-phospho-D-ribosyl)imidazole-4-carboxamide. It participates in purine metabolism; IMP biosynthesis via de novo pathway; 5-formamido-1-(5-phospho-D-ribosyl)imidazole-4-carboxamide from 5-amino-1-(5-phospho-D-ribosyl)imidazole-4-carboxamide (10-formyl THF route): step 1/1. It functions in the pathway purine metabolism; IMP biosynthesis via de novo pathway; IMP from 5-formamido-1-(5-phospho-D-ribosyl)imidazole-4-carboxamide: step 1/1. This chain is Bifunctional purine biosynthesis protein PurH, found in Lactobacillus delbrueckii subsp. bulgaricus (strain ATCC BAA-365 / Lb-18).